A 413-amino-acid chain; its full sequence is MHDYFGGWFKLEQEVARQLRILRRGVAEIVPEEDLQAKLRKSLATGKPLKVKLGLDPTAPDIHLGHTVVLQKLRQFQELGHQVIIIIGDFTGRIGDPTGKSETRRQLTEAEILANAETYKEQIFKVLDPEQTRVTFNSHWLGKLTFAEVIELAARTTVARMLERDDFARRFQENRPISIHEFFYPLMQGYDSVALAADVELGGTDQKFNLLMGRHLQREYGQEPQVAMMMPILPGLDGVQKMSKSLGNYIGIKESPREMYGKTMSLPDELMLTYYELVTAVPLEELAAIRQGLASGSLHPRDAKMRLAREIVAMYHTPEAALEAEREFRQVFQQHDLPDDMPELTIKEDRVWLPRLMVQAGLAPSTSEARRLIRQGAVKIDGERVTDPDTEVEVREGQVLQAGKRKFARLHTF.

A 'HIGH' region motif is present at residues 57–66; sequence PTAPDIHLGH. The 'KMSKS' region signature appears at 241-245; it reads KMSKS. Residue Lys-244 participates in ATP binding. Residues 351–412 form the S4 RNA-binding domain; that stretch reads VWLPRLMVQA…GKRKFARLHT (62 aa).

The protein belongs to the class-I aminoacyl-tRNA synthetase family. TyrS type 2 subfamily. Homodimer.

The protein resides in the cytoplasm. The catalysed reaction is tRNA(Tyr) + L-tyrosine + ATP = L-tyrosyl-tRNA(Tyr) + AMP + diphosphate + H(+). In terms of biological role, catalyzes the attachment of tyrosine to tRNA(Tyr) in a two-step reaction: tyrosine is first activated by ATP to form Tyr-AMP and then transferred to the acceptor end of tRNA(Tyr). The protein is Tyrosine--tRNA ligase of Moorella thermoacetica (strain ATCC 39073 / JCM 9320).